A 444-amino-acid polypeptide reads, in one-letter code: Acyl-CoA 6-desaturase (444 aa).

Residues 1 to 130 (MGKGGNQGEG…EDMNLFKTNH (130 aa)) are Cytoplasmic-facing. In terms of domain architecture, Cytochrome b5 heme-binding spans 18 to 95 (MPTFRWEEIQ…LKPLLIGELA (78 aa)). The chain crosses the membrane as a helical span at residues 131 to 151 (LFFFLLLSHIIVMESIAWFIL). Residues 152-157 (SYFGNG) are Lumenal-facing. Residues 158–178 (WIPTVITAFVLATSQAQAGWL) traverse the membrane as a helical segment. Residues 179–264 (QHDYGHLSVY…KYLPYNHQHE (86 aa)) lie on the Cytoplasmic side of the membrane. A Histidine box-1 motif is present at residues 180–184 (HDYGH). The Histidine box-2 motif lies at 217-221 (HFQHH). A helical membrane pass occupies residues 265-285 (YFFLIGPPLLIPMYFQYQIIM). The Lumenal segment spans residues 286 to 305 (TMIRRRDWVDLAWAISYYAR). The helical transmembrane segment at 306 to 326 (FFYTYIPFYGILGALVFLNFI) threads the bilayer. Topologically, residues 327–444 (RFLESHWFVW…ELWLDAYLHK (118 aa)) are cytoplasmic. The short motif at 382-386 (QIEHH) is the Histidine box-3 element.

The protein belongs to the fatty acid desaturase type 1 family. As to expression, expressed in the liver and brain (at protein level). Highest activity is found in the liver and adrenals followed by the testes and other organs, absent in adipose tissue.

Its subcellular location is the endoplasmic reticulum membrane. It is found in the microsome membrane. It carries out the reaction (9Z,12Z)-octadecadienoyl-CoA + 2 Fe(II)-[cytochrome b5] + O2 + 2 H(+) = (6Z,9Z,12Z)-octadecatrienoyl-CoA + 2 Fe(III)-[cytochrome b5] + 2 H2O. It catalyses the reaction (9Z,12Z,15Z)-octadecatrienoyl-CoA + 2 Fe(II)-[cytochrome b5] + O2 + 2 H(+) = (6Z,9Z,12Z,15Z)-octadecatetraenoyl-CoA + 2 Fe(III)-[cytochrome b5] + 2 H2O. The enzyme catalyses (9Z,12Z,15Z,18Z,21Z)-tetracosapentaenoyl-CoA + 2 Fe(II)-[cytochrome b5] + O2 + 2 H(+) = (6Z,9Z,12Z,15Z,18Z,21Z)-tetracosahexaenoyl-CoA + 2 Fe(III)-[cytochrome b5] + 2 H2O. The catalysed reaction is (11E)-octadecenoyl-CoA + 2 Fe(II)-[cytochrome b5] + O2 + 2 H(+) = (6Z,11E)-octadecadienoyl-CoA + 2 Fe(III)-[cytochrome b5] + 2 H2O. It carries out the reaction (11Z,14Z)-eicosadienoyl-CoA + 2 Fe(II)-[cytochrome b5] + O2 + 2 H(+) = (8Z,11Z,14Z)-eicosatrienoyl-CoA + 2 Fe(III)-[cytochrome b5] + 2 H2O. It catalyses the reaction (11Z,14Z,17Z)-eicosatrienoyl-CoA + 2 Fe(II)-[cytochrome b5] + O2 + 2 H(+) = (8Z,11Z,14Z,17Z)-eicosatetraenoyl-CoA + 2 Fe(III)-[cytochrome b5] + 2 H2O. Its pathway is lipid metabolism; polyunsaturated fatty acid biosynthesis. In terms of biological role, involved in the biosynthesis of highly unsaturated fatty acids (HUFA) from the essential polyunsaturated fatty acids (PUFA) linoleic acid (LA) (18:2n-6) and alpha-linolenic acid (ALA) (18:3n-3) precursors, acting as a fatty acyl-coenzyme A (CoA) desaturase that introduces a cis double bond at carbon 6 of the fatty acyl chain. Catalyzes the first and rate limiting step in this pathway which is the desaturation of LA (18:2n-6) and ALA (18:3n-3) into gamma-linoleate (GLA) (18:3n-6) and stearidonate (18:4n-3), respectively. Subsequently, in the biosynthetic pathway of HUFA n-3 series, it desaturates tetracosapentaenoate (24:5n-3) to tetracosahexaenoate (24:6n-3), which is then converted to docosahexaenoate (DHA)(22:6n-3), an important lipid for nervous system function. It can also desaturate (11E)-octadecenoate (trans-vaccenoate) at carbon 6 generating (6Z,11E)-octadecadienoate. In addition to Delta-6 activity, this enzyme exhibits Delta-8 activity with slight biases toward n-3 fatty acyl-CoA substrates. In Rattus norvegicus (Rat), this protein is Acyl-CoA 6-desaturase (Fads2).